The chain runs to 90 residues: Probable small nuclear ribonucleoprotein F (90 aa).

Residues 7–80 form the Sm domain; sequence NPRPFLQDLV…VLYIKKADEA (74 aa).

It belongs to the snRNP Sm proteins family. SmF/LSm6 subfamily.

The protein localises to the nucleus. The protein resides in the cytoplasm. Plays a role in pre-mRNA splicing as a core component of the spliceosomal U1, U2, U4 and U5 small nuclear ribonucleoproteins (snRNPs), the building blocks of the spliceosome. This chain is Probable small nuclear ribonucleoprotein F, found in Neurospora crassa (strain ATCC 24698 / 74-OR23-1A / CBS 708.71 / DSM 1257 / FGSC 987).